The primary structure comprises 51 residues: Large ribosomal subunit protein eL39 (51 aa).

Belongs to the eukaryotic ribosomal protein eL39 family.

The protein is Large ribosomal subunit protein eL39 (RpL39) of Plutella xylostella (Diamondback moth).